Here is a 779-residue protein sequence, read N- to C-terminus: Subtilisin-like protease SBT3.18 (779 aa).

The N-terminal stretch at 1-21 (MYFWVMFFTLMIKVKLYITNG) is a signal peptide. A propeptide spans 22–109 (DIFQNRPTVY…VFKSKSLKLH (88 aa)) (activation peptide). The region spanning 30-109 (VYVVYLGANR…VFKSKSLKLH (80 aa)) is the Inhibitor I9 domain. Asparagine 84 is a glycosylation site (N-linked (GlcNAc...) asparagine). The 509-residue stretch at 113-621 (SWDFLGLAVD…AGHINPLKAM (509 aa)) folds into the Peptidase S8 domain. Residues aspartate 144 and histidine 221 each act as charge relay system in the active site. 2 N-linked (GlcNAc...) asparagine glycosylation sites follow: asparagine 236 and asparagine 406. The active-site Charge relay system is the serine 553.

Belongs to the peptidase S8 family.

It localises to the secreted. The sequence is that of Subtilisin-like protease SBT3.18 from Arabidopsis thaliana (Mouse-ear cress).